A 605-amino-acid chain; its full sequence is Leucine aminopeptidase (605 aa).

Residues lysine 374, aspartate 379, and lysine 386 each contribute to the a peptide site. Residues lysine 374 and aspartate 379 each coordinate Zn(2+). Positions 384-401 are L13 loop; sequence NLKAAPGSMIDLMKFDMS. The active site involves lysine 386. Residues aspartate 394, methionine 396, aspartate 399, aspartate 459, and glutamate 461 each contribute to the Zn(2+) site. Positions 399 and 459 each coordinate a peptide. Residue arginine 463 is part of the active site.

This sequence belongs to the peptidase M17 family. As to quaternary structure, homohexamer composed of dimer of trimers. Both the identity and concentration of metal ions available dictate the extent to which oligomerization occurs; Mn(2+) and Co(2+) induces oligomerization, whereas Mg(2+) has no effect, and Zn(2+) causes irreversible protein aggregation in vitro. The cofactor is Zn(2+).

The protein localises to the cytoplasm. It carries out the reaction Release of an N-terminal amino acid, Xaa-|-Yaa-, in which Xaa is preferably Leu, but may be other amino acids including Pro although not Arg or Lys, and Yaa may be Pro. Amino acid amides and methyl esters are also readily hydrolyzed, but rates on arylamides are exceedingly low.. It catalyses the reaction L-cysteinylglycine + H2O = L-cysteine + glycine. Its activity is regulated as follows. Oligomerization is required for catalytic activity and is metal-dependent. The type of metal that binds the 2 metal binding sites influences catalytic activity and substrate specificity. In vitro, activated by Co(2+), Mn(2+), Ni(2+), Mg(2+) and Zn(2+) with decreasing strength. Occupancy of the site 2 is essential and sufficient for activating the enzyme but occupation of the 2 sites is necessary for full catalytic activity. Inhibited by fungal metabolite bestatin. Inhibited by Phe-Naphthyl (PNAP). Its function is as follows. Aminopeptidase which preferentially cleaves leucine residues from the N-terminus of peptides. Also, has some activity towards tryptophan and methionine and to a lesser extent towards phenylalanine. Has very low activity or no activity towards the other amino acids. In addition, cleaves the Cys-Gly dipeptide, probably as part of the glutathione regulation pathway; cleavage only occurs in the presence of Mn(2+). During the asexual blood stage, plays a role in the final step of host hemoglobin catabolism, by cleaving hemoglobin-derived oligopeptides providing a source of amino acids for the parasite protein synthesis and for the maintenance of osmotic homeostasis. During the asexual blood stage, may also play a role during the ring-trophozoite transition. In Plasmodium falciparum (isolate 3D7), this protein is Leucine aminopeptidase.